The primary structure comprises 1464 residues: DNA polymerase III PolC-type (1464 aa).

The Exonuclease domain occupies 426–582 (YVVFDVETTG…YDAEATGRLL (157 aa)).

It belongs to the DNA polymerase type-C family. PolC subfamily.

The protein resides in the cytoplasm. It carries out the reaction DNA(n) + a 2'-deoxyribonucleoside 5'-triphosphate = DNA(n+1) + diphosphate. Required for replicative DNA synthesis. This DNA polymerase also exhibits 3' to 5' exonuclease activity. The polypeptide is DNA polymerase III PolC-type (Streptococcus thermophilus (strain ATCC BAA-491 / LMD-9)).